The sequence spans 334 residues: 6-phosphogluconolactonase (334 aa).

This sequence belongs to the cycloisomerase 2 family.

The enzyme catalyses 6-phospho-D-glucono-1,5-lactone + H2O = 6-phospho-D-gluconate + H(+). The protein operates within carbohydrate degradation; pentose phosphate pathway; D-ribulose 5-phosphate from D-glucose 6-phosphate (oxidative stage): step 2/3. Functionally, catalyzes the hydrolysis of 6-phosphogluconolactone to 6-phosphogluconate. This chain is 6-phosphogluconolactonase, found in Yersinia pseudotuberculosis serotype IB (strain PB1/+).